Consider the following 446-residue polypeptide: MSASAVGQGRNVVVIGTQWGDEGKGKIVDWLTDHAKGVVRFQGGHNAGHTLIIGGKKTILRLIPSGIMREGTVCYIGNGVVLSPEALFREIEELETAGLEVQKRLRISEAATLILPYHVAIDKAREARRGAAKIGTTGRGIGPAYEDKVARRALRVQDLFDPQQFAERLRENLDFHNFMLTQYLGAEAVDYQQTLDDALAFAPRLAPMVADVSAELYAVNAAGGNLMFEGAQGTLLDVDHGTYPFVTSSNCVAGAAAAGAGVGPGRLSYILGITKAYCTRVGAGPFPSELYDNDNPARQDQVGVRLANVGKEFGSVTGRPRRTGWLDAAALKRSVQINGVSGLCLTKLDVLDGLESIKLCVGYTLDGKTVDILPRGSDAVARCEPVYEEFPGWNESTFGVKAWDALPEAARVYLKRVEEVVGIPIDMISTGPDRDETILLRHPYLA.

GTP is bound by residues 20–26 and 48–50; these read GDEGKGK and GHT. The active-site Proton acceptor is the aspartate 21. Residues aspartate 21 and glycine 48 each contribute to the Mg(2+) site. IMP-binding positions include 21 to 24, 46 to 49, threonine 137, arginine 151, glutamine 232, threonine 247, and arginine 319; these read DEGK and NAGH. Histidine 49 functions as the Proton donor in the catalytic mechanism. 315-321 contacts substrate; that stretch reads SVTGRPR. GTP is bound by residues arginine 321, 347 to 349, and 429 to 431; these read KLD and STG.

The protein belongs to the adenylosuccinate synthetase family. As to quaternary structure, homodimer. Mg(2+) serves as cofactor.

It localises to the cytoplasm. The enzyme catalyses IMP + L-aspartate + GTP = N(6)-(1,2-dicarboxyethyl)-AMP + GDP + phosphate + 2 H(+). It participates in purine metabolism; AMP biosynthesis via de novo pathway; AMP from IMP: step 1/2. Its function is as follows. Plays an important role in the de novo pathway of purine nucleotide biosynthesis. Catalyzes the first committed step in the biosynthesis of AMP from IMP. The chain is Adenylosuccinate synthetase 1 from Cupriavidus pinatubonensis (strain JMP 134 / LMG 1197) (Cupriavidus necator (strain JMP 134)).